The primary structure comprises 402 residues: S-adenosylmethionine synthase (402 aa).

An ATP-binding site is contributed by histidine 16. Aspartate 18 contributes to the Mg(2+) binding site. Glutamate 44 is a K(+) binding site. Positions 57 and 103 each coordinate L-methionine. The segment at 103–113 (QSPDIAQGVDT) is flexible loop. Residues 178-180 (DGK), 249-250 (KF), aspartate 258, 264-265 (RK), alanine 281, and lysine 285 contribute to the ATP site. Aspartate 258 contributes to the L-methionine binding site. Lysine 289 lines the L-methionine pocket.

This sequence belongs to the AdoMet synthase family. Homotetramer; dimer of dimers. Mg(2+) serves as cofactor. Requires K(+) as cofactor.

The protein resides in the cytoplasm. It catalyses the reaction L-methionine + ATP + H2O = S-adenosyl-L-methionine + phosphate + diphosphate. Its pathway is amino-acid biosynthesis; S-adenosyl-L-methionine biosynthesis; S-adenosyl-L-methionine from L-methionine: step 1/1. Its function is as follows. Catalyzes the formation of S-adenosylmethionine (AdoMet) from methionine and ATP. The overall synthetic reaction is composed of two sequential steps, AdoMet formation and the subsequent tripolyphosphate hydrolysis which occurs prior to release of AdoMet from the enzyme. The polypeptide is S-adenosylmethionine synthase (Mycolicibacterium vanbaalenii (strain DSM 7251 / JCM 13017 / BCRC 16820 / KCTC 9966 / NRRL B-24157 / PYR-1) (Mycobacterium vanbaalenii)).